Reading from the N-terminus, the 262-residue chain is Outer membrane protein assembly factor BamD (262 aa).

The N-terminal stretch at 1–18 (MRKIKSLALLAVAALVIG) is a signal peptide. Cys-19 carries the N-palmitoyl cysteine lipid modification. Residue Cys-19 is the site of S-diacylglycerol cysteine attachment.

Belongs to the BamD family. As to quaternary structure, part of the Bam complex.

The protein localises to the cell outer membrane. In terms of biological role, part of the outer membrane protein assembly complex, which is involved in assembly and insertion of beta-barrel proteins into the outer membrane. The polypeptide is Outer membrane protein assembly factor BamD (Haemophilus influenzae (strain ATCC 51907 / DSM 11121 / KW20 / Rd)).